The chain runs to 322 residues: MNTPTQSFRAKAAIFSLLLLSCMQCHAQLSATFYDNTCPNALNTIRTSVRQAISSERRMAASLIRLHFHDCFVQGCDASILLDETPSIESEKTALPNLGSARGFGIIEDAKREVEKICPGVVSCADILTVAARDASAAVGGPSWTVKLGRRDSTTASKTLAETDLPGPFDPLNRLISSFASKGLSTRDMVALSGAHTIGQAQCFLFRDRIYSNGTDIDAGFASTRRRQCPQEGENGNLAPLDLVTPNQFDNNYFKNLIQKKGLLQSDQVLFNGGSTDNIVSEYSNSARAFSSDFAAAMIKMGDISPLSGQNGIIRKVCGSVN.

A signal peptide spans 1–27 (MNTPTQSFRAKAAIFSLLLLSCMQCHA). Residue Gln-28 is modified to Pyrrolidone carboxylic acid. Disulfide bonds link Cys-38–Cys-118, Cys-71–Cys-76, Cys-124–Cys-318, and Cys-203–Cys-229. His-69 acts as the Proton acceptor in catalysis. Asp-70, Val-73, Gly-75, Asp-77, and Ser-79 together coordinate Ca(2+). Residue Pro-166 coordinates substrate. His-196 is a binding site for heme b. Thr-197 lines the Ca(2+) pocket. Asn-213 carries an N-linked (GlcNAc...) asparagine glycan. Residues Asp-242, Thr-245, and Asp-250 each contribute to the Ca(2+) site.

The protein belongs to the peroxidase family. Classical plant (class III) peroxidase subfamily. The cofactor is Ca(2+). Heme b serves as cofactor. Mesophyll protoplasts and to a much lesser extent, roots and germinating seeds.

It localises to the secreted. The enzyme catalyses 2 a phenolic donor + H2O2 = 2 a phenolic radical donor + 2 H2O. Functionally, removal of H(2)O(2), oxidation of toxic reductants, biosynthesis and degradation of lignin, suberization, auxin catabolism, response to environmental stresses such as wounding, pathogen attack and oxidative stress. These functions might be dependent on each isozyme/isoform in each plant tissue. In terms of biological role, plays an integral role in secondary cell wall biosynthesis by the polymerization of cinnamyl alcohols into lignin and by forming rigid cross-links between cellulose, pectin, hydroxy-proline-rich glycoproteins, and lignin. This chain is Lignin-forming anionic peroxidase, found in Nicotiana sylvestris (Wood tobacco).